Consider the following 242-residue polypeptide: Mitochondrial intermembrane space import and assembly protein 40 (242 aa).

A mitochondrion-targeting transit peptide spans 1 to 18 (MFARSFSNASRTIARRSL). Residues 1 to 22 (MFARSFSNASRTIARRSLSTRS) show a composition bias toward polar residues. The tract at residues 1-30 (MFARSFSNASRTIARRSLSTRSGPAPSSLW) is disordered. Topologically, residues 19-34 (STRSGPAPSSLWSSRN) are mitochondrial matrix. A helical; Signal-anchor for type II membrane protein transmembrane segment spans residues 35–51 (AVIAGTTLAITALAVTS). Topologically, residues 52-242 (ERRKVFNESA…EETAAPAAAP (191 aa)) are mitochondrial intermembrane. Residues 58–111 (NESAQKATSPRDSIIAQDSLKENVHKKSVRQDEFSGESTKPEASTSSDSVEKAA) form a disordered region. Over residues 59–68 (ESAQKATSPR) the composition is skewed to polar residues. Positions 76 to 90 (SLKENVHKKSVRQDE) are enriched in basic and acidic residues. Residues 93-105 (GESTKPEASTSSD) show a composition bias toward polar residues. Intrachain disulfides connect C144–C146, C155–C188, and C165–C178. One can recognise a CHCH domain in the interval 152-196 (TGPCGEQFKAAFSCFVYSEAEPKGVDCVELFKVMQDCFREHPEIY). 2 consecutive short sequence motifs (cx9C motif) follow at residues 155-165 (CGEQFKAAFSC) and 178-188 (CVELFKVMQDC). The disordered stretch occupies residues 215 to 242 (DEAPPQEGTMEEKVEAAKEETAAPAAAP). A compositionally biased stretch (basic and acidic residues) spans 224-235 (MEEKVEAAKEET).

In terms of assembly, monomer. Cu(2+) serves as cofactor. Zn(2+) is required as a cofactor.

It localises to the mitochondrion inner membrane. In terms of biological role, required for the import and folding of small cysteine-containing proteins (small Tim) in the mitochondrial intermembrane space (IMS). Forms a redox cycle with ERV1 that involves a disulfide relay system. Precursor proteins to be imported into the IMS are translocated in their reduced form into the mitochondria. The oxidized form of MIA40 forms a transient intermolecular disulfide bridge with the reduced precursor protein, resulting in oxidation of the precursor protein that now contains an intramolecular disulfide bond and is able to undergo folding in the IMS. The chain is Mitochondrial intermembrane space import and assembly protein 40 (MIA40) from Cryptococcus neoformans var. neoformans serotype D (strain B-3501A) (Filobasidiella neoformans).